Reading from the N-terminus, the 359-residue chain is Putative B3 domain-containing protein At3g24850 (359 aa).

2 disordered regions span residues 92 to 111 (DSEI…LQNS) and 159 to 192 (EKME…KRTG). The span at 100-111 (TSDSQMKTLQNS) shows a compositional bias: polar residues. A DNA-binding region (TF-B3) is located at residues 250–351 (FNNLLQNDFL…VLCFAMEQSS (102 aa)).

The protein resides in the nucleus. In Arabidopsis thaliana (Mouse-ear cress), this protein is Putative B3 domain-containing protein At3g24850.